We begin with the raw amino-acid sequence, 450 residues long: tRNA-2-methylthio-N(6)-dimethylallyladenosine synthase (450 aa).

In terms of domain architecture, MTTase N-terminal spans 2–119 (KKVFVKTYGC…LPDLIARRQR (118 aa)). Residues cysteine 11, cysteine 48, cysteine 82, cysteine 156, cysteine 160, and cysteine 163 each coordinate [4Fe-4S] cluster. In terms of domain architecture, Radical SAM core spans 142 to 375 (RVEGPSAFVS…QATIEENVQR (234 aa)). Positions 378–448 (QGMVGTVQRI…PHSLRGEIVV (71 aa)) constitute a TRAM domain.

It belongs to the methylthiotransferase family. MiaB subfamily. Monomer. [4Fe-4S] cluster is required as a cofactor.

It is found in the cytoplasm. The enzyme catalyses N(6)-dimethylallyladenosine(37) in tRNA + (sulfur carrier)-SH + AH2 + 2 S-adenosyl-L-methionine = 2-methylsulfanyl-N(6)-dimethylallyladenosine(37) in tRNA + (sulfur carrier)-H + 5'-deoxyadenosine + L-methionine + A + S-adenosyl-L-homocysteine + 2 H(+). In terms of biological role, catalyzes the methylthiolation of N6-(dimethylallyl)adenosine (i(6)A), leading to the formation of 2-methylthio-N6-(dimethylallyl)adenosine (ms(2)i(6)A) at position 37 in tRNAs that read codons beginning with uridine. This is tRNA-2-methylthio-N(6)-dimethylallyladenosine synthase from Cupriavidus taiwanensis (strain DSM 17343 / BCRC 17206 / CCUG 44338 / CIP 107171 / LMG 19424 / R1) (Ralstonia taiwanensis (strain LMG 19424)).